The sequence spans 264 residues: Expansin-B3 (264 aa).

An N-terminal signal peptide occupies residues 1 to 25; that stretch reads MQLFPVMLATLCIVLQLLIGSSALA. One can recognise an Expansin-like EG45 domain in the interval 54-162; sequence GGACGYGTLV…RRTACKYRGK (109 aa). 3 disulfides stabilise this stretch: cysteine 57-cysteine 86, cysteine 89-cysteine 157, and cysteine 94-cysteine 100. An Expansin-like CBD domain is found at 175-256; that stretch reads FWLSLLVEFE…NWAPKATYSS (82 aa).

This sequence belongs to the expansin family. Expansin B subfamily.

The protein resides in the secreted. Its subcellular location is the cell wall. The protein localises to the membrane. Its function is as follows. May cause loosening and extension of plant cell walls by disrupting non-covalent bonding between cellulose microfibrils and matrix glucans. No enzymatic activity has been found. The polypeptide is Expansin-B3 (EXPB3) (Arabidopsis thaliana (Mouse-ear cress)).